The chain runs to 225 residues: Isoprenyl transferase 1 (225 aa).

Asp-3 is a catalytic residue. Asp-3 is a binding site for Mg(2+). Residues Gly-4–Arg-7, Trp-8, His-21, and Ser-49–Glu-51 contribute to the substrate site. The active-site Proton acceptor is Asn-52. Substrate-binding positions include Arg-55, Arg-174, and Arg-180–Ser-182. Residue Glu-193 participates in Mg(2+) binding.

The protein belongs to the UPP synthase family. In terms of assembly, homodimer. Mg(2+) serves as cofactor.

Catalyzes the condensation of isopentenyl diphosphate (IPP) with allylic pyrophosphates generating different type of terpenoids. The chain is Isoprenyl transferase 1 from Corynebacterium glutamicum (strain ATCC 13032 / DSM 20300 / JCM 1318 / BCRC 11384 / CCUG 27702 / LMG 3730 / NBRC 12168 / NCIMB 10025 / NRRL B-2784 / 534).